A 511-amino-acid polypeptide reads, in one-letter code: Phosphomethylpyrimidine synthase (511 aa).

Substrate contacts are provided by residues Asn-127, Met-156, Tyr-185, His-221, 241–243 (SRG), 282–285 (DGLR), and Glu-321. His-325 contacts Zn(2+). Tyr-348 lines the substrate pocket. Residue His-389 participates in Zn(2+) binding. The [4Fe-4S] cluster site is built by Cys-469, Cys-472, and Cys-477. Residues 492 to 511 (KGMEEKSEVTICNRKKESGK) form a disordered region.

It belongs to the ThiC family. [4Fe-4S] cluster serves as cofactor.

The catalysed reaction is 5-amino-1-(5-phospho-beta-D-ribosyl)imidazole + S-adenosyl-L-methionine = 4-amino-2-methyl-5-(phosphooxymethyl)pyrimidine + CO + 5'-deoxyadenosine + formate + L-methionine + 3 H(+). The protein operates within cofactor biosynthesis; thiamine diphosphate biosynthesis. In terms of biological role, catalyzes the synthesis of the hydroxymethylpyrimidine phosphate (HMP-P) moiety of thiamine from aminoimidazole ribotide (AIR) in a radical S-adenosyl-L-methionine (SAM)-dependent reaction. The protein is Phosphomethylpyrimidine synthase of Leptospira borgpetersenii serovar Hardjo-bovis (strain JB197).